Reading from the N-terminus, the 139-residue chain is Transcription antitermination protein NusB (139 aa).

Belongs to the NusB family.

Functionally, involved in transcription antitermination. Required for transcription of ribosomal RNA (rRNA) genes. Binds specifically to the boxA antiterminator sequence of the ribosomal RNA (rrn) operons. This Sodalis glossinidius (strain morsitans) protein is Transcription antitermination protein NusB.